The following is a 599-amino-acid chain: NADH-quinone oxidoreductase subunit C/D (599 aa).

The interval 1 to 189 (MTELMTQNSA…DPFVLTKQKE (189 aa)) is NADH dehydrogenase I subunit C. The tract at residues 213–599 (DFMFLNLGPN…IDFVMSDVDR (387 aa)) is NADH dehydrogenase I subunit D.

In the N-terminal section; belongs to the complex I 30 kDa subunit family. This sequence in the C-terminal section; belongs to the complex I 49 kDa subunit family. NDH-1 is composed of 13 different subunits. Subunits NuoB, CD, E, F, and G constitute the peripheral sector of the complex.

It localises to the cell inner membrane. It carries out the reaction a quinone + NADH + 5 H(+)(in) = a quinol + NAD(+) + 4 H(+)(out). In terms of biological role, NDH-1 shuttles electrons from NADH, via FMN and iron-sulfur (Fe-S) centers, to quinones in the respiratory chain. The immediate electron acceptor for the enzyme in this species is believed to be ubiquinone. Couples the redox reaction to proton translocation (for every two electrons transferred, four hydrogen ions are translocated across the cytoplasmic membrane), and thus conserves the redox energy in a proton gradient. The polypeptide is NADH-quinone oxidoreductase subunit C/D (Sodalis glossinidius (strain morsitans)).